A 206-amino-acid chain; its full sequence is Small ribosomal subunit protein uS4 (206 aa).

The S4 RNA-binding domain occupies 96–158 (SRLDNVVYRM…AKKQSRIKAA (63 aa)).

This sequence belongs to the universal ribosomal protein uS4 family. As to quaternary structure, part of the 30S ribosomal subunit. Contacts protein S5. The interaction surface between S4 and S5 is involved in control of translational fidelity.

One of the primary rRNA binding proteins, it binds directly to 16S rRNA where it nucleates assembly of the body of the 30S subunit. Functionally, with S5 and S12 plays an important role in translational accuracy. This chain is Small ribosomal subunit protein uS4, found in Wigglesworthia glossinidia brevipalpis.